Reading from the N-terminus, the 419-residue chain is MRFIGLVLLLLSVKLFGIDATLEIVKNTNKIPYIVVERLDSENADFGAKVLKMLAADLKVSGHFQVYDGSVNKNSEVAYKDYADKKIDLLAQIKVSKSSNSLTGTISLYDINTSKRIYVKDYTENDVKRFPFIAHRMCIDVNSYIQAPSIEWMQRLVVLSQYTTSGNSEILIADYTLTYQKVVVKGGLNIFPKWVDSKQESIYYTKYLDVPTILKHNLTTGHIEQLVGSEGIAVVSDVSKNGENLILSLSPTALSDLYLYNTKSKNLRRLTNYSGIDVDGKFVNNEKEIIFVSDRLGYPNIFMMRLDGGGTEQVVLHGRNNSAVTSNGKYAVYTSRETNNEFGANTFNLYLISLAPGSNYIRRLTASGKNQMPKYSNDGGTIMYLKYYKAQSALGIIRIDYNTNYFFPLIKMKIQAFDW.

The signal sequence occupies residues 1–17; the sequence is MRFIGLVLLLLSVKLFG.

The protein belongs to the TolB family. In terms of assembly, the Tol-Pal system is composed of five core proteins: the inner membrane proteins TolA, TolQ and TolR, the periplasmic protein TolB and the outer membrane protein Pal. They form a network linking the inner and outer membranes and the peptidoglycan layer.

The protein localises to the periplasm. Its function is as follows. Part of the Tol-Pal system, which plays a role in outer membrane invagination during cell division and is important for maintaining outer membrane integrity. This is Tol-Pal system protein TolB from Helicobacter hepaticus (strain ATCC 51449 / 3B1).